A 315-amino-acid chain; its full sequence is Methionyl-tRNA formyltransferase (315 aa).

113 to 116 lines the (6S)-5,6,7,8-tetrahydrofolate pocket; sequence SLLP.

This sequence belongs to the Fmt family.

The enzyme catalyses L-methionyl-tRNA(fMet) + (6R)-10-formyltetrahydrofolate = N-formyl-L-methionyl-tRNA(fMet) + (6S)-5,6,7,8-tetrahydrofolate + H(+). Its function is as follows. Attaches a formyl group to the free amino group of methionyl-tRNA(fMet). The formyl group appears to play a dual role in the initiator identity of N-formylmethionyl-tRNA by promoting its recognition by IF2 and preventing the misappropriation of this tRNA by the elongation apparatus. The chain is Methionyl-tRNA formyltransferase from Escherichia coli O45:K1 (strain S88 / ExPEC).